The sequence spans 370 residues: Serine/threonine-protein kinase SAPK5 (370 aa).

A Protein kinase domain is found at 4-260 (YEPVREIGAG…MGEIKSHPWF (257 aa)). Residues 10 to 18 (IGAGNFGVA) and lysine 33 contribute to the ATP site. Aspartate 123 serves as the catalytic Proton acceptor. The tract at residues 312–370 (EAQTVPKPDKPVSGYGWGTDDDDDDQQPAEEEDEEDDYDRTVREVHASVDLDMSNLQIS) is disordered. The span at 330–349 (TDDDDDDQQPAEEEDEEDDY) shows a compositional bias: acidic residues. A compositionally biased stretch (basic and acidic residues) spans 350-360 (DRTVREVHASV).

The protein belongs to the protein kinase superfamily. Ser/Thr protein kinase family. In terms of processing, may be phosphorylated. As to expression, expressed in leaf blades, leaf sheaths and roots. Expressed in shoots and roots of young seedlings.

The protein localises to the cytoplasm. The protein resides in the nucleus. It catalyses the reaction L-seryl-[protein] + ATP = O-phospho-L-seryl-[protein] + ADP + H(+). The catalysed reaction is L-threonyl-[protein] + ATP = O-phospho-L-threonyl-[protein] + ADP + H(+). With respect to regulation, activated by hyperosmotic stress. Functionally, may play a role in signal transduction of hyperosmotic response. The chain is Serine/threonine-protein kinase SAPK5 (SAPK5) from Oryza sativa subsp. japonica (Rice).